The primary structure comprises 203 residues: DNA-binding transcriptional repressor ScoC (203 aa).

Residues 13-157 form the HTH marR-type domain; that stretch reads ALVFTQKMAQ…MMCMIRHIYG (145 aa). The H-T-H motif DNA-binding region spans 63–86; it reads ISEIAKFGVMHVSTAFNFSKKLEE. The tract at residues 183–203 is disordered; that stretch reads KKKAKDSAADEPAEELEPVNS. Over residues 191-203 the composition is skewed to acidic residues; the sequence is ADEPAEELEPVNS.

Homodimer. Interacts with SinR.

Functionally, negative regulator of protease production and sporulation. Acts by binding directly to the promoter of protease genes (aprE and nprE), and by repressing oligopeptide permease operons (appABCDF and oppABCDF), thereby preventing uptake of oligopeptides required for initiation of sporulation. Acts with SinR as a corepressor of epr expression. Binds to non-m6A-5-methylated 5'-GACGAG-3' sites, tested with scpA; when the target is methylated by DnmA, this repressor no longer binds and transcription is up-regulated. This is DNA-binding transcriptional repressor ScoC from Bacillus subtilis (strain 168).